A 243-amino-acid chain; its full sequence is Carboxy-S-adenosyl-L-methionine synthase (243 aa).

S-adenosyl-L-methionine contacts are provided by residues Tyr-39, 64 to 66 (GCS), 90 to 91 (DN), 118 to 119 (DL), Asn-133, and Arg-200.

This sequence belongs to the class I-like SAM-binding methyltransferase superfamily. Cx-SAM synthase family. Homodimer.

It catalyses the reaction prephenate + S-adenosyl-L-methionine = carboxy-S-adenosyl-L-methionine + 3-phenylpyruvate + H2O. Functionally, catalyzes the conversion of S-adenosyl-L-methionine (SAM) to carboxy-S-adenosyl-L-methionine (Cx-SAM). In Idiomarina loihiensis (strain ATCC BAA-735 / DSM 15497 / L2-TR), this protein is Carboxy-S-adenosyl-L-methionine synthase.